The following is a 311-amino-acid chain: Probable porphobilinogen deaminase (311 aa).

S-(dipyrrolylmethanemethyl)cysteine is present on Cys237. A disordered region spans residues 270 to 289 (SKTGDKNNPKSLGQSAGEEL).

The protein belongs to the HMBS family. Requires dipyrromethane as cofactor.

The enzyme catalyses 4 porphobilinogen + H2O = hydroxymethylbilane + 4 NH4(+). The protein operates within porphyrin-containing compound metabolism; protoporphyrin-IX biosynthesis; coproporphyrinogen-III from 5-aminolevulinate: step 2/4. Functionally, tetrapolymerization of the monopyrrole PBG into the hydroxymethylbilane pre-uroporphyrinogen in several discrete steps. The chain is Probable porphobilinogen deaminase from Nitrosopumilus maritimus (strain SCM1).